Here is an 872-residue protein sequence, read N- to C-terminus: Facilitated trehalose transporter Tret1 (872 aa).

4 disordered regions span residues 1-40 (MSGR…LKEK), 53-217 (VESN…KATS), 262-281 (SSSE…RKHQ), and 293-315 (KVLQ…KRLI). At 1 to 406 (MSGRDNRGAG…VYRPTTNPIY (406 aa)) the chain is on the cytoplasmic side. The span at 8–22 (GAGGGGGGGGGGSGG) shows a compositional bias: gly residues. Composition is skewed to low complexity over residues 55–68 (SNLS…SLDT), 84–98 (RHPQ…QQQR), and 121–132 (PPTQQQPQQQHQ). S262, S263, and S264 each carry phosphoserine. Phosphoserine occurs at positions 334 and 336. The disordered stretch occupies residues 340–361 (FLTSRQHFQQQRSISTDSRKSR). The span at 344-355 (RQHFQQQRSIST) shows a compositional bias: polar residues. A helical transmembrane segment spans residues 407-427 (IWTQVLAALSVSLGSLVVGFV). At 428–454 (SAYTSPALITMTNGNITSFEVTPQAAS) the chain is on the extracellular side. N442 carries N-linked (GlcNAc...) asparagine glycosylation. The helical transmembrane segment at 455–475 (WVGGIMPLAGLLGGIAGGPFI) threads the bilayer. At 476–488 (EYLGRRNTILTTA) the chain is on the cytoplasmic side. Residues 489–509 (VPFIVSSLLIACAVNITMVLL) form a helical membrane-spanning segment. Topologically, residues 510–511 (GR) are extracellular. A helical membrane pass occupies residues 512 to 532 (FLAGFCVGIASLSLPVYLGET). The Cytoplasmic segment spans residues 533–538 (VQPEVR). Residues 539–559 (GTLGLLPTAFGNIGILLCFVA) traverse the membrane as a helical segment. Topologically, residues 560-566 (GTYMDWS) are extracellular. Residues 567–587 (MLAFLGAALPVPFLILMFLIP) form a helical membrane-spanning segment. Residues 588-650 (ETPRWYVSRG…ELLKRNNLKP (63 aa)) are Cytoplasmic-facing. The chain crosses the membrane as a helical span at residues 651–671 (LSISLGLMFFQQLSGINAVIF). Residues 672–687 (YTVQIFKDAGSTIDGN) lie on the Extracellular side of the membrane. A helical membrane pass occupies residues 688-708 (VCTIIVGIVNFMATFIGIILI). Topologically, residues 709–714 (DRAGRK) are cytoplasmic. The helical transmembrane segment at 715 to 735 (ILLYVSNVAMIITLFVLGGFF) threads the bilayer. Residues 736 to 755 (YCKDKAGIDVSNVGWLPLSC) lie on the Extracellular side of the membrane. Residues 756-776 (FVVYILGFSLGFGPIPWLMMG) form a helical membrane-spanning segment. Over 777 to 784 (EILPAKIR) the chain is Cytoplasmic. Residues 785-803 (GSAASVATAFNWTCTFVVT) traverse the membrane as a helical segment. Residues 804 to 816 (KTFQDMLDVIGSY) lie on the Extracellular side of the membrane. Residues 817 to 837 (GAFWLFGAICFIGLFFVIIYV) form a helical membrane-spanning segment. Residues 838–872 (PETQGKTLEDIERKMMGRVRRMSSVANIKPLSFNM) lie on the Cytoplasmic side of the membrane. Residues S860 and S861 each carry the phosphoserine modification.

This sequence belongs to the major facilitator superfamily. Sugar transporter (TC 2.A.1.1) family. Trehalose transporter subfamily.

It is found in the cell membrane. Low-capacity facilitative transporter for trehalose. Does not transport maltose, sucrose or lactose. Mediates the bidirectional transfer of trehalose. Responsible for the transport of trehalose synthesized in the fat body and the incorporation of trehalose into other tissues that require a carbon source, thereby regulating trehalose levels in the hemolymph. The chain is Facilitated trehalose transporter Tret1 from Drosophila willistoni (Fruit fly).